We begin with the raw amino-acid sequence, 618 residues long: DNA mismatch repair protein MutL (618 aa).

Residues 366 to 381 (AEPTAAREPATPRYSG) are compositionally biased toward low complexity. A disordered region spans residues 366 to 403 (AEPTAAREPATPRYSGGASGGNGGRQSAGGWPHAQPGY). A compositionally biased stretch (gly residues) spans 382–392 (GASGGNGGRQS).

This sequence belongs to the DNA mismatch repair MutL/HexB family.

This protein is involved in the repair of mismatches in DNA. It is required for dam-dependent methyl-directed DNA mismatch repair. May act as a 'molecular matchmaker', a protein that promotes the formation of a stable complex between two or more DNA-binding proteins in an ATP-dependent manner without itself being part of a final effector complex. The protein is DNA mismatch repair protein MutL of Salmonella schwarzengrund (strain CVM19633).